The sequence spans 515 residues: Cell division control protein 6 homolog (515 aa).

Residues 1 to 24 (MPTLRSATASASTAGTASPTAIAT) show a composition bias toward low complexity. The disordered stretch occupies residues 1–70 (MPTLRSATAS…TPKLLSASPR (70 aa)). Over residues 43–52 (DASQFTSPHK) the composition is skewed to polar residues.

The protein belongs to the CDC6/cdc18 family.

The protein localises to the nucleus. In terms of biological role, may be involved in the initiation of DNA replication. The polypeptide is Cell division control protein 6 homolog (Oryza sativa subsp. japonica (Rice)).